The chain runs to 290 residues: MNSGYLHFPEFDPVIFSIGPVALHWYGLMYLVGFIFAMWLAGRRAGRPGSGWTKNEVENLLYAGFLGVFLGGRIGYVLFYNFPTFLSDPLYLFRVWDGGMSFHGGLIGVILVMVIFAKRTKRNFFQVADFMAPLIPFGLGAGRLGNFINGELWGRVDPSVPYTMLFPASRAEDIALLPSHPEWQSIFDTYGVLPRHMSQLYELALEGVVLFIILNLFIRKPRPMGSVSGLFLIGYGAFRIIVEFFRQPDAQFTGEWVQYISMGQILSIPMIVAGIIMMIWAYRRPQQQLS.

Transmembrane regions (helical) follow at residues 21–41, 60–80, 96–116, 124–144, 198–218, 225–245, and 260–280; these read VALH…MWLA, LLYA…VLFY, WDGG…MVIF, FFQV…AGRL, SQLY…NLFI, GSVS…VEFF, and ISMG…MMIW. Arginine 143 contributes to the a 1,2-diacyl-sn-glycero-3-phospho-(1'-sn-glycerol) binding site.

Belongs to the Lgt family.

It localises to the cell inner membrane. The catalysed reaction is L-cysteinyl-[prolipoprotein] + a 1,2-diacyl-sn-glycero-3-phospho-(1'-sn-glycerol) = an S-1,2-diacyl-sn-glyceryl-L-cysteinyl-[prolipoprotein] + sn-glycerol 1-phosphate + H(+). It functions in the pathway protein modification; lipoprotein biosynthesis (diacylglyceryl transfer). Its function is as follows. Catalyzes the transfer of the diacylglyceryl group from phosphatidylglycerol to the sulfhydryl group of the N-terminal cysteine of a prolipoprotein, the first step in the formation of mature lipoproteins. The protein is Phosphatidylglycerol--prolipoprotein diacylglyceryl transferase of Enterobacter sp. (strain 638).